Here is a 227-residue protein sequence, read N- to C-terminus: NADH-quinone oxidoreductase subunit C (227 aa).

It belongs to the complex I 30 kDa subunit family. As to quaternary structure, NDH-1 is composed of 14 different subunits. Subunits NuoB, C, D, E, F, and G constitute the peripheral sector of the complex.

It is found in the cell inner membrane. It catalyses the reaction a quinone + NADH + 5 H(+)(in) = a quinol + NAD(+) + 4 H(+)(out). NDH-1 shuttles electrons from NADH, via FMN and iron-sulfur (Fe-S) centers, to quinones in the respiratory chain. The immediate electron acceptor for the enzyme in this species is believed to be ubiquinone. Couples the redox reaction to proton translocation (for every two electrons transferred, four hydrogen ions are translocated across the cytoplasmic membrane), and thus conserves the redox energy in a proton gradient. The polypeptide is NADH-quinone oxidoreductase subunit C (Coxiella burnetii (strain RSA 331 / Henzerling II)).